Reading from the N-terminus, the 431-residue chain is Trigger factor (431 aa).

A PPIase FKBP-type domain is found at 158 to 243; that stretch reads GDLVAVETWS…VAEVSEPVVP (86 aa).

The protein belongs to the FKBP-type PPIase family. Tig subfamily.

The protein resides in the cytoplasm. It catalyses the reaction [protein]-peptidylproline (omega=180) = [protein]-peptidylproline (omega=0). Functionally, involved in protein export. Acts as a chaperone by maintaining the newly synthesized protein in an open conformation. Functions as a peptidyl-prolyl cis-trans isomerase. This Stenotrophomonas maltophilia (strain R551-3) protein is Trigger factor.